The sequence spans 360 residues: Phospho-N-acetylmuramoyl-pentapeptide-transferase (360 aa).

A run of 10 helical transmembrane segments spans residues 25–45, 73–93, 97–117, 135–155, 170–190, 199–219, 236–256, 263–283, 288–308, and 338–358; these read RGIL…PWMI, TMGG…WADL, YVWV…VDDY, FWQS…APSA, IPLG…SSNA, GLAI…CYLS, AGEL…FLWF, VFMG…MAVI, MVLF…VIQV, and VIVR…ATLK.

The protein belongs to the glycosyltransferase 4 family. MraY subfamily. The cofactor is Mg(2+).

Its subcellular location is the cell inner membrane. The enzyme catalyses UDP-N-acetyl-alpha-D-muramoyl-L-alanyl-gamma-D-glutamyl-meso-2,6-diaminopimeloyl-D-alanyl-D-alanine + di-trans,octa-cis-undecaprenyl phosphate = di-trans,octa-cis-undecaprenyl diphospho-N-acetyl-alpha-D-muramoyl-L-alanyl-D-glutamyl-meso-2,6-diaminopimeloyl-D-alanyl-D-alanine + UMP. The protein operates within cell wall biogenesis; peptidoglycan biosynthesis. In terms of biological role, catalyzes the initial step of the lipid cycle reactions in the biosynthesis of the cell wall peptidoglycan: transfers peptidoglycan precursor phospho-MurNAc-pentapeptide from UDP-MurNAc-pentapeptide onto the lipid carrier undecaprenyl phosphate, yielding undecaprenyl-pyrophosphoryl-MurNAc-pentapeptide, known as lipid I. The chain is Phospho-N-acetylmuramoyl-pentapeptide-transferase from Pseudomonas syringae pv. syringae (strain B728a).